The primary structure comprises 522 residues: Zinc finger and BTB domain-containing protein 18 (522 aa).

One can recognise a BTB domain in the interval 24–91; the sequence is CDCTVLVGDA…MYEGKLQFKD (68 aa). The segment covering 121-143 has biased composition (basic and acidic residues); it reads ATTEADSTKKEEDASSCSDKVES. The segment at 121 to 166 is disordered; it reads ATTEADSTKKEEDASSCSDKVESLSDGSSHMAGDLPSDEDEGEDDK. Serine 157 bears the Phosphoserine mark. Lysine 273 is covalently cross-linked (Glycyl lysine isopeptide (Lys-Gly) (interchain with G-Cter in SUMO2)). Residues 310 to 427 form an interaction with DNMT3A region; that stretch reads EPAHLAPLRE…TFSCMYTLKR (118 aa). C2H2-type zinc fingers lie at residues 370-392, 410-432, 438-460, and 466-489; these read FMCP…LSTH, PTCS…ERTH, YTCT…AVVH, and HACK…RKFH. 2 positions are modified to phosphoserine: serine 516 and serine 517.

The protein belongs to the krueppel C2H2-type zinc-finger protein family. ZBTB18 subfamily. In terms of assembly, interacts with DNMT3A.

It localises to the nucleus. Functionally, transcriptional repressor that plays a role in various developmental processes such as myogenesis and brain development. Specifically binds the consensus DNA sequence 5'-[AC]ACATCTG[GT][AC]-3' which contains the E box core, and acts by recruiting chromatin remodeling multiprotein complexes. Plays a key role in myogenesis by directly repressing the expression of ID2 and ID3, 2 inhibitors of skeletal myogenesis. Also involved in controlling cell division of progenitor cells and regulating the survival of postmitotic cortical neurons. May also play a role in the organization of chromosomes in the nucleus. In Rattus norvegicus (Rat), this protein is Zinc finger and BTB domain-containing protein 18 (Zbtb18).